The chain runs to 172 residues: Large ribosomal subunit protein bL17 (172 aa).

The segment at 153 to 172 (AQAAEPVAAAEPATPATTAG) is disordered.

It belongs to the bacterial ribosomal protein bL17 family. Part of the 50S ribosomal subunit. Contacts protein L32.

The protein is Large ribosomal subunit protein bL17 of Sorangium cellulosum (strain So ce56) (Polyangium cellulosum (strain So ce56)).